The primary structure comprises 366 residues: MSLYIGLMSGTSMDGIDAALLELPSNHLIHGITKQYSDDVRRNLDDLIMGNHLTLASICQLNTLIGREFAEAVRQLLSEIKVHPKEIQAIGSHGQTVCHDTSGNIPYTLQLGCGHTISSLTGITVVADFRTRDLVNGGQGAPFAPLYHQQIFSKVNESVAVVNIGGIANVTFIAKNQMTRGWDIGPGNCLMDAWIYKNKGALFDKSGVWASQGEVIYPLLEYLLQDPFFHLDSPKSIGKEYFSLSWLQKHLKPDYTPADIQATLLALTAHTIAETILNESGEIKQLYLCGGGAHNTHLKENLARLLPGIAVKSIAELGISPDYLEAMMFAWLAAQTINQIPVNLTSITGAKGIAILGAVYPIIKSY.

10-17 (GTSMDGID) provides a ligand contact to ATP.

Belongs to the anhydro-N-acetylmuramic acid kinase family.

It catalyses the reaction 1,6-anhydro-N-acetyl-beta-muramate + ATP + H2O = N-acetyl-D-muramate 6-phosphate + ADP + H(+). Its pathway is amino-sugar metabolism; 1,6-anhydro-N-acetylmuramate degradation. It participates in cell wall biogenesis; peptidoglycan recycling. Its function is as follows. Catalyzes the specific phosphorylation of 1,6-anhydro-N-acetylmuramic acid (anhMurNAc) with the simultaneous cleavage of the 1,6-anhydro ring, generating MurNAc-6-P. Is required for the utilization of anhMurNAc either imported from the medium or derived from its own cell wall murein, and thus plays a role in cell wall recycling. This is Anhydro-N-acetylmuramic acid kinase from Legionella pneumophila subsp. pneumophila (strain Philadelphia 1 / ATCC 33152 / DSM 7513).